The primary structure comprises 131 residues: Small ribosomal subunit protein uS12 (131 aa).

The interval 1–32 (MPTFSQLVRKGRTAPRYKTASPALQGSPQRRG) is disordered. Aspartate 89 bears the 3-methylthioaspartic acid mark. Residues 110 to 131 (RKQGRSKYGAKRAKGGAAAGKK) form a disordered region. Over residues 111-131 (KQGRSKYGAKRAKGGAAAGKK) the composition is skewed to basic residues.

Belongs to the universal ribosomal protein uS12 family. Part of the 30S ribosomal subunit. Contacts proteins S8 and S17. May interact with IF1 in the 30S initiation complex.

Its function is as follows. With S4 and S5 plays an important role in translational accuracy. Functionally, interacts with and stabilizes bases of the 16S rRNA that are involved in tRNA selection in the A site and with the mRNA backbone. Located at the interface of the 30S and 50S subunits, it traverses the body of the 30S subunit contacting proteins on the other side and probably holding the rRNA structure together. The combined cluster of proteins S8, S12 and S17 appears to hold together the shoulder and platform of the 30S subunit. The polypeptide is Small ribosomal subunit protein uS12 (Acidobacterium capsulatum (strain ATCC 51196 / DSM 11244 / BCRC 80197 / JCM 7670 / NBRC 15755 / NCIMB 13165 / 161)).